A 415-amino-acid polypeptide reads, in one-letter code: Gamma-glutamyl phosphate reductase 1 (415 aa).

Belongs to the gamma-glutamyl phosphate reductase family.

It localises to the cytoplasm. It catalyses the reaction L-glutamate 5-semialdehyde + phosphate + NADP(+) = L-glutamyl 5-phosphate + NADPH + H(+). The protein operates within amino-acid biosynthesis; L-proline biosynthesis; L-glutamate 5-semialdehyde from L-glutamate: step 2/2. In terms of biological role, catalyzes the NADPH-dependent reduction of L-glutamate 5-phosphate into L-glutamate 5-semialdehyde and phosphate. The product spontaneously undergoes cyclization to form 1-pyrroline-5-carboxylate. The protein is Gamma-glutamyl phosphate reductase 1 of Bacillus licheniformis (strain ATCC 14580 / DSM 13 / JCM 2505 / CCUG 7422 / NBRC 12200 / NCIMB 9375 / NCTC 10341 / NRRL NRS-1264 / Gibson 46).